A 429-amino-acid chain; its full sequence is ATP-dependent Clp protease ATP-binding subunit ClpX (429 aa).

Positions 1–54 (MARSKSQKIEGCSFCGRTRAEAEGKIISAKSVAICFECSKICHNLFKEESDKPA) constitute a ClpX-type ZB domain. Residues Cys12, Cys15, Cys35, and Cys38 each coordinate Zn(2+). 119–126 (PTGSGKTL) serves as a coordination point for ATP.

This sequence belongs to the ClpX chaperone family. Component of the ClpX-ClpP complex. Forms a hexameric ring that, in the presence of ATP, binds to fourteen ClpP subunits assembled into a disk-like structure with a central cavity, resembling the structure of eukaryotic proteasomes.

Functionally, ATP-dependent specificity component of the Clp protease. It directs the protease to specific substrates. Can perform chaperone functions in the absence of ClpP. The chain is ATP-dependent Clp protease ATP-binding subunit ClpX from Borrelia duttonii (strain Ly).